Reading from the N-terminus, the 219-residue chain is Transmembrane protein 179B (219 aa).

The next 4 membrane-spanning stretches (helical) occupy residues 9 to 29 (VELL…ATLT), 65 to 85 (FVAG…FFWV), 98 to 118 (IGLR…LVSA), and 162 to 182 (LHTA…ALLL). Ser-206 is modified (phosphoserine).

It belongs to the TMEM179 family.

The protein localises to the membrane. This chain is Transmembrane protein 179B (Tmem179b), found in Mus musculus (Mouse).